Consider the following 626-residue polypeptide: Phosphomethylpyrimidine synthase (626 aa).

Residues 1 to 22 (MTKQEKAINLSESAQVDQQSVQ) are disordered. Positions 10–22 (LSESAQVDQQSVQ) are enriched in polar residues. Substrate contacts are provided by residues asparagine 232, methionine 261, tyrosine 290, histidine 326, 346–348 (SRG), 387–390 (DGLR), and glutamate 426. A Zn(2+)-binding site is contributed by histidine 430. A substrate-binding site is contributed by tyrosine 453. Histidine 494 provides a ligand contact to Zn(2+). Residues cysteine 574, cysteine 577, and cysteine 582 each contribute to the [4Fe-4S] cluster site.

The protein belongs to the ThiC family. Homodimer. [4Fe-4S] cluster is required as a cofactor.

The enzyme catalyses 5-amino-1-(5-phospho-beta-D-ribosyl)imidazole + S-adenosyl-L-methionine = 4-amino-2-methyl-5-(phosphooxymethyl)pyrimidine + CO + 5'-deoxyadenosine + formate + L-methionine + 3 H(+). It participates in cofactor biosynthesis; thiamine diphosphate biosynthesis. Catalyzes the synthesis of the hydroxymethylpyrimidine phosphate (HMP-P) moiety of thiamine from aminoimidazole ribotide (AIR) in a radical S-adenosyl-L-methionine (SAM)-dependent reaction. The protein is Phosphomethylpyrimidine synthase of Pseudomonas putida (strain ATCC 700007 / DSM 6899 / JCM 31910 / BCRC 17059 / LMG 24140 / F1).